The sequence spans 443 residues: Probable serine transporter (443 aa).

The Cytoplasmic portion of the chain corresponds to 1–48 (MEIASNKGVIADASTPAGRAGMSESEWREAIKFDSTDTGWVIMSIGMA). A helical transmembrane segment spans residues 49–69 (IGAGIVFLPVQVGLMGLWVFL). The Periplasmic segment spans residues 70–110 (LSSVIGYPAMYLFQRLFINTLAESPECKDYPSVISGYLGKN). Residues 111-131 (WGILLGALYFVMLVIWMFVYS) form a helical membrane-spanning segment. Topologically, residues 132–149 (TAITNDSASYLHTFGVTE) are cytoplasmic. A helical membrane pass occupies residues 150-170 (GLLSDSPFYGLVLICILVAIS). Topologically, residues 171-182 (SRGEKLLFKIST) are periplasmic. The chain crosses the membrane as a helical span at residues 183-203 (GMVLTKLLVVAALGVSMVGMW). The Cytoplasmic portion of the chain corresponds to 204–214 (HLYNVGSLPPL). A helical transmembrane segment spans residues 215-235 (GLLVKNAIITLPFTLTSILFI). At 236–264 (QTLSPMVISYRSREKSIEVARHKALRAMN) the chain is on the periplasmic side. The helical transmembrane segment at 265–285 (IAFGILFVTVFFYAVSFTLAM) threads the bilayer. The Cytoplasmic segment spans residues 286–297 (GHDEAVKAYEQN). 2 consecutive transmembrane segments (helical) span residues 298 to 318 (ISALAIAAQFISGDGAAWVKV) and 319 to 339 (VSVILNIFAVMTAFFGVYLGF). Residues 340 to 367 (REATQGIVMNILRRKMPAEKINENLVQR) lie on the Cytoplasmic side of the membrane. A helical transmembrane segment spans residues 368–388 (GIMIFAILLAWSAIVLNAPVL). Ser389 is a topological domain (periplasmic). Residues 390-410 (FTSICSPIFGMVGCLIPAWLV) form a helical membrane-spanning segment. Residues 411–421 (YKVPALHKYKG) are Cytoplasmic-facing. The helical transmembrane segment at 422–442 (MSLYLIIVTGLLLCVSPFLAF) threads the bilayer. Residue Ser443 is a topological domain, periplasmic.

Belongs to the amino acid/polyamine transporter 2 family. SdaC/TdcC subfamily.

Its subcellular location is the cell inner membrane. Functionally, plays a role in L-cysteine detoxification. May transport both D- and L-serine. The chain is Probable serine transporter (dlsT) from Escherichia coli (strain K12).